The chain runs to 283 residues: Thymidylate synthase (283 aa).

R33 lines the dUMP pocket. (6R)-5,10-methylene-5,6,7,8-tetrahydrofolate is bound at residue H63. Residue 138–139 (RR) participates in dUMP binding. C158 functions as the Nucleophile in the catalytic mechanism. DUMP is bound by residues 185–188 (RSAD), N196, and 226–228 (HIY). D188 is a binding site for (6R)-5,10-methylene-5,6,7,8-tetrahydrofolate. Residue A282 participates in (6R)-5,10-methylene-5,6,7,8-tetrahydrofolate binding.

Belongs to the thymidylate synthase family. Bacterial-type ThyA subfamily. Homodimer.

It is found in the cytoplasm. It catalyses the reaction dUMP + (6R)-5,10-methylene-5,6,7,8-tetrahydrofolate = 7,8-dihydrofolate + dTMP. It functions in the pathway pyrimidine metabolism; dTTP biosynthesis. Functionally, catalyzes the reductive methylation of 2'-deoxyuridine-5'-monophosphate (dUMP) to 2'-deoxythymidine-5'-monophosphate (dTMP) while utilizing 5,10-methylenetetrahydrofolate (mTHF) as the methyl donor and reductant in the reaction, yielding dihydrofolate (DHF) as a by-product. This enzymatic reaction provides an intracellular de novo source of dTMP, an essential precursor for DNA biosynthesis. In Methylibium petroleiphilum (strain ATCC BAA-1232 / LMG 22953 / PM1), this protein is Thymidylate synthase.